A 417-amino-acid polypeptide reads, in one-letter code: Ankyrin repeat and SAM domain-containing protein 4B (417 aa).

The segment at 1–252 is mediates localization to microvilli; sequence MSTRYHQAAS…SGDFKEKLQL (252 aa). 3 ANK repeats span residues 31–60, 64–93, and 97–126; these read DGMT…DPDR, WGNT…NIFA, and DLQT…AQNI. Residues 130–164 are a coiled coil; the sequence is KKVTRLKEQAQKNARRQIKECERLQEKHQNKMAHT. The tract at residues 151 to 195 is disordered; it reads ERLQEKHQNKMAHTYSKEESGTLSSSKGTFSRSSPSNASAPGTFG. The segment covering 171 to 190 has biased composition (polar residues); it reads GTLSSSKGTFSRSSPSNASA. The tract at residues 253–346 is mediates interaction with MYO7B; that stretch reads SAEEDGSVHH…EWEEDVVDAT (94 aa). S283 is modified (phosphoserine). The segment at 305-330 is disordered; that stretch reads RQGASEADEGAADEEGEENGLKDDLP. A compositionally biased stretch (acidic residues) spans 310–322; sequence EADEGAADEEGEE. The 53-residue stretch at 351–403 folds into the SAM domain; it reads FLLSQHLEEFLPIFKREQIDLEALLLCSDEDLQSIQMQLGPRKKVLNAINRRK. The PDZ-binding; mediates interaction with USH1C signature appears at 415 to 417; the sequence is TSL.

Part of the IMAC/intermicrovillar adhesion complex/intermicrovillar tip-link complex composed of ANKS4B, MYO7B, USH1C, CDHR2 and CDHR5. Interacts with USH1C; the interaction is direct and is required for ANKS4B localization to the tip of microvilli. Interacts with MYO7B; the interaction is direct. May interact with HSPA5. In terms of tissue distribution, expressed in kidney and small intestine.

The protein localises to the cell projection. It is found in the microvillus. Functionally, as part of the intermicrovillar adhesion complex/IMAC plays a role in epithelial brush border differentiation, controlling microvilli organization and length. Plays a role in assembly of the complex. May play a role in cellular response to endoplasmic reticulum stress. This is Ankyrin repeat and SAM domain-containing protein 4B from Homo sapiens (Human).